A 262-amino-acid chain; its full sequence is Polyamine aminopropyltransferase (262 aa).

The 249-residue stretch at 1–249 folds into the PABS domain; that stretch reads MWITQEITPY…DIHRAAFALP (249 aa). Asparagine 29 is an S-methyl-5'-thioadenosine binding site. Aspartate 83 contacts spermidine. Aspartate 155 serves as the catalytic Proton acceptor.

Belongs to the spermidine/spermine synthase family. In terms of assembly, homodimer or homotetramer.

Its subcellular location is the cytoplasm. It catalyses the reaction S-adenosyl 3-(methylsulfanyl)propylamine + putrescine = S-methyl-5'-thioadenosine + spermidine + H(+). It functions in the pathway amine and polyamine biosynthesis; spermidine biosynthesis; spermidine from putrescine: step 1/1. Its function is as follows. Catalyzes the irreversible transfer of a propylamine group from the amino donor S-adenosylmethioninamine (decarboxy-AdoMet) to putrescine (1,4-diaminobutane) to yield spermidine. In Helicobacter pylori (strain G27), this protein is Polyamine aminopropyltransferase.